Consider the following 231-residue polypeptide: Response regulator Rre1 (231 aa).

The Response regulatory domain maps to 6–123 (SLLLVDDEPG…ELEAIVRNLL (118 aa)). Asp56 is subject to 4-aspartylphosphate. Positions 163 to 228 (PSPIKLDFTP…ELVRFALQHG (66 aa)) constitute an HTH luxR-type domain. Residues 187–206 (NKEIAAQLKTSVRNVEKYVS) constitute a DNA-binding region (H-T-H motif).

In terms of assembly, interacts with histidine kinase Hik2; may accept phosphate from Hik2.

Member of at least 2 two-component regulatory systems Hik2/Rre1 and Hik34/Rre1. Responds to hyperosmotic stress, regulates expression of at least 24 genes including dnaK2 and hspA with Hik34 and sigB (sll0306), sll0528, slr1119, slr0852 and ssr3188 with Hik2. Responds to salt stress, regulates expression of at least 24 genes including adhA, dnaK2 and hspA with Hik34. Binds the adhA promoter. Phosphorylated by Hik2 in vitro. Phosphorylated protein has 10-fold higher affinity for DNA than unphosphorylated protein. The polypeptide is Response regulator Rre1 (Synechocystis sp. (strain ATCC 27184 / PCC 6803 / Kazusa)).